A 310-amino-acid chain; its full sequence is tRNA pseudouridine synthase B (310 aa).

The Nucleophile role is filled by aspartate 49.

The protein belongs to the pseudouridine synthase TruB family. Type 1 subfamily.

It catalyses the reaction uridine(55) in tRNA = pseudouridine(55) in tRNA. Responsible for synthesis of pseudouridine from uracil-55 in the psi GC loop of transfer RNAs. This Rhizobium johnstonii (strain DSM 114642 / LMG 32736 / 3841) (Rhizobium leguminosarum bv. viciae) protein is tRNA pseudouridine synthase B.